Reading from the N-terminus, the 420-residue chain is Glucose-1-phosphate adenylyltransferase (420 aa).

Residues tyrosine 107, glycine 173, 188–189, and serine 206 contribute to the alpha-D-glucose 1-phosphate site; that span reads EK.

It belongs to the bacterial/plant glucose-1-phosphate adenylyltransferase family. In terms of assembly, homotetramer.

The catalysed reaction is alpha-D-glucose 1-phosphate + ATP + H(+) = ADP-alpha-D-glucose + diphosphate. The protein operates within glycan biosynthesis; glycogen biosynthesis. Involved in the biosynthesis of ADP-glucose, a building block required for the elongation reactions to produce glycogen. Catalyzes the reaction between ATP and alpha-D-glucose 1-phosphate (G1P) to produce pyrophosphate and ADP-Glc. The sequence is that of Glucose-1-phosphate adenylyltransferase from Shewanella frigidimarina (strain NCIMB 400).